Consider the following 348-residue polypeptide: Protein RecA (348 aa).

67–74 (GPESSGKT) provides a ligand contact to ATP.

This sequence belongs to the RecA family.

The protein resides in the cytoplasm. In terms of biological role, can catalyze the hydrolysis of ATP in the presence of single-stranded DNA, the ATP-dependent uptake of single-stranded DNA by duplex DNA, and the ATP-dependent hybridization of homologous single-stranded DNAs. It interacts with LexA causing its activation and leading to its autocatalytic cleavage. This chain is Protein RecA, found in Clostridioides difficile (strain 630) (Peptoclostridium difficile).